The following is a 340-amino-acid chain: Putative UPF0607 protein ENSP00000332738 (340 aa).

Residues 75-90 are compositionally biased toward basic and acidic residues; it reads VRAEEPKEATEVKDQV. 2 disordered regions span residues 75–130 and 215–281; these read VRAE…NPRP and GLLM…KLPC. Polar residues predominate over residues 91-126; the sequence is ETQGQEDNKTGPCSNGKAASTSRPLETQGNLTSSWY. Residues 228 to 241 are compositionally biased toward low complexity; sequence PAALRSSRSSPPRA. Positions 242–251 are enriched in basic residues; it reads AGHRPRKRKL. The segment covering 254 to 266 has biased composition (low complexity); the sequence is PPLQLQQTPPLQL.

The protein belongs to the UPF0607 family.

This Homo sapiens (Human) protein is Putative UPF0607 protein ENSP00000332738.